We begin with the raw amino-acid sequence, 552 residues long: Probable acyl-activating enzyme 5, peroxisomal (552 aa).

The Microbody targeting signal signature appears at 550-552 (SRM).

Belongs to the ATP-dependent AMP-binding enzyme family. Expressed in roots, stems and developing seeds.

It localises to the peroxisome. Functionally, may act as an acid--thiol ligase that activates carboxylic acids by forming acyl-CoAs. This is Probable acyl-activating enzyme 5, peroxisomal (AAE5) from Arabidopsis thaliana (Mouse-ear cress).